We begin with the raw amino-acid sequence, 370 residues long: Lipoyl synthase 1, chloroplastic (370 aa).

Disordered regions lie at residues Met1–Arg25 and Glu39–Ala67. The transit peptide at Met1–Arg37 directs the protein to the chloroplast. Cys95, Cys100, Cys106, Cys132, Cys136, Cys139, and Ser347 together coordinate [4Fe-4S] cluster. In terms of domain architecture, Radical SAM core spans Gly115 to Arg336.

Belongs to the radical SAM superfamily. Lipoyl synthase family. [4Fe-4S] cluster is required as a cofactor.

The protein resides in the plastid. The protein localises to the chloroplast. It carries out the reaction [[Fe-S] cluster scaffold protein carrying a second [4Fe-4S](2+) cluster] + N(6)-octanoyl-L-lysyl-[protein] + 2 oxidized [2Fe-2S]-[ferredoxin] + 2 S-adenosyl-L-methionine + 4 H(+) = [[Fe-S] cluster scaffold protein] + N(6)-[(R)-dihydrolipoyl]-L-lysyl-[protein] + 4 Fe(3+) + 2 hydrogen sulfide + 2 5'-deoxyadenosine + 2 L-methionine + 2 reduced [2Fe-2S]-[ferredoxin]. Its pathway is protein modification; protein lipoylation via endogenous pathway; protein N(6)-(lipoyl)lysine from octanoyl-[acyl-carrier-protein]: step 2/2. In terms of biological role, catalyzes the radical-mediated insertion of two sulfur atoms into the C-6 and C-8 positions of the octanoyl moiety bound to the lipoyl domains of lipoate-dependent enzymes, thereby converting the octanoylated domains into lipoylated derivatives. The polypeptide is Lipoyl synthase 1, chloroplastic (Oryza sativa subsp. indica (Rice)).